Consider the following 272-residue polypeptide: Shikimate dehydrogenase (NADP(+)) (272 aa).

Residues serine 14–serine 16 and threonine 61 contribute to the shikimate site. Catalysis depends on lysine 65, which acts as the Proton acceptor. Shikimate is bound by residues asparagine 86 and aspartate 102. NADP(+)-binding positions include glycine 126–alanine 130, asparagine 149–lysine 154, serine 189, and methionine 213. Tyrosine 215 serves as a coordination point for shikimate. Glycine 238 contributes to the NADP(+) binding site.

It belongs to the shikimate dehydrogenase family. As to quaternary structure, homodimer.

The enzyme catalyses shikimate + NADP(+) = 3-dehydroshikimate + NADPH + H(+). The protein operates within metabolic intermediate biosynthesis; chorismate biosynthesis; chorismate from D-erythrose 4-phosphate and phosphoenolpyruvate: step 4/7. Functionally, involved in the biosynthesis of the chorismate, which leads to the biosynthesis of aromatic amino acids. Catalyzes the reversible NADPH linked reduction of 3-dehydroshikimate (DHSA) to yield shikimate (SA). The polypeptide is Shikimate dehydrogenase (NADP(+)) (Haemophilus influenzae (strain ATCC 51907 / DSM 11121 / KW20 / Rd)).